The following is a 169-amino-acid chain: Methane monooxygenase component A gamma chain (169 aa).

As to quaternary structure, m.trichosporium has two forms of methane monooxygenase, a soluble and a membrane-bound type. The soluble type consists of four components (A to D): protein A, comprising three chains, in an alpha-2, beta-2, gamma-2 configuration, is a nonheme iron protein containing an unusual mu-hydroxo bridge structure at its active site and interacts with both oxygen and methane.

The enzyme catalyses methane + NADH + O2 + H(+) = methanol + NAD(+) + H2O. It carries out the reaction methane + NADPH + O2 + H(+) = methanol + NADP(+) + H2O. Functionally, responsible for the initial oxygenation of methane to methanol in methanotrophs. It also catalyzes the monohydroxylation of a variety of unactivated alkenes, alicyclic, aromatic and heterocyclic compounds. This Methylosinus trichosporium protein is Methane monooxygenase component A gamma chain (mmoZ).